The chain runs to 1241 residues: ATP-dependent helicase/nuclease subunit A (1241 aa).

In terms of domain architecture, UvrD-like helicase ATP-binding spans 12–485; the sequence is SQWTDDQWKA…IDLAKNFRSR (474 aa). 33–40 is a binding site for ATP; sequence AAAGSGKT. Residues 505–805 form the UvrD-like helicase C-terminal domain; the sequence is GEIDYDADAE…RIMTIHKSKG (301 aa).

It belongs to the helicase family. AddA subfamily. In terms of assembly, heterodimer of AddA and AddB/RexB. Requires Mg(2+) as cofactor.

It catalyses the reaction Couples ATP hydrolysis with the unwinding of duplex DNA by translocating in the 3'-5' direction.. The catalysed reaction is ATP + H2O = ADP + phosphate + H(+). The heterodimer acts as both an ATP-dependent DNA helicase and an ATP-dependent, dual-direction single-stranded exonuclease. Recognizes the chi site generating a DNA molecule suitable for the initiation of homologous recombination. The AddA nuclease domain is required for chi fragment generation; this subunit has the helicase and 3' -&gt; 5' nuclease activities. The polypeptide is ATP-dependent helicase/nuclease subunit A (Bacillus cereus (strain G9842)).